A 581-amino-acid polypeptide reads, in one-letter code: Kelch-like protein 38 (581 aa).

The BTB domain maps to 34 to 101 (TDVSICAGAR…VYTGEAHIAT (68 aa)). Residues 136–237 (CLGMIRLSEI…HPAFFHHFIA (102 aa)) form the BACK domain. Kelch repeat units lie at residues 285–332 (FLIL…TLHR), 334–383 (IYVL…AHKN), 384–431 (FIFS…VKDQ), 433–479 (LYLF…VLGE), 480–521 (RIVI…VMGN), and 523–573 (LYVT…TLQC).

The chain is Kelch-like protein 38 (KLHL38) from Homo sapiens (Human).